The sequence spans 382 residues: F-box/LRR-repeat/kelch-repeat protein At1g09650 (382 aa).

Residues 7-52 enclose the F-box domain; that stretch reads CLMMESLPHEVVECILERLDADPLLRFKAVSKQWKSTIESPFFQRR. The stretch at 78–101 is one LRR 1 repeat; the sequence is IEALTTLVLGSSSSVKIPTPWEEE. The Kelch 1 repeat unit spans residues 180–227; that stretch reads PVWLYNSIEIGLENATTCEVFDFSTNAWRYVSPAAPYRIVGCPAPVCV. An LRR 2 repeat occupies 239 to 262; sequence ETKILSFDLHTETFQVVSKAPFAN. The Kelch 2 repeat unit spans residues 270–319; sequence MCNLDNRLCVSEMKLPNQVIWSFNSGNKTWHKMCSINLDITSRWFGPTQV.

In Arabidopsis thaliana (Mouse-ear cress), this protein is F-box/LRR-repeat/kelch-repeat protein At1g09650.